A 342-amino-acid polypeptide reads, in one-letter code: Phosphate acyltransferase (342 aa).

It belongs to the PlsX family. As to quaternary structure, homodimer. Probably interacts with PlsY.

Its subcellular location is the cytoplasm. The enzyme catalyses a fatty acyl-[ACP] + phosphate = an acyl phosphate + holo-[ACP]. Its pathway is lipid metabolism; phospholipid metabolism. Catalyzes the reversible formation of acyl-phosphate (acyl-PO(4)) from acyl-[acyl-carrier-protein] (acyl-ACP). This enzyme utilizes acyl-ACP as fatty acyl donor, but not acyl-CoA. The polypeptide is Phosphate acyltransferase (Shewanella pealeana (strain ATCC 700345 / ANG-SQ1)).